A 281-amino-acid polypeptide reads, in one-letter code: Carbonic anhydrase (281 aa).

3 residues coordinate Zn(2+): cysteine 106, histidine 161, and cysteine 164.

It belongs to the beta-class carbonic anhydrase family. Zn(2+) is required as a cofactor.

It localises to the cytoplasm. Its subcellular location is the nucleus. The protein resides in the mitochondrion intermembrane space. The enzyme catalyses hydrogencarbonate + H(+) = CO2 + H2O. With respect to regulation, amines and amino acids act as activators of catalytic activity, whereas natural product-based phenols, dithiocarbamates, aliphatic and aromatic carboxylates, boronic acids, and sulfonamides act as inhibitors of enzymatic activity. Also inhibited by anions such as cyanide and carbonate, and to a lesser extent by sulfate, phenylboronic, and phenyl arsonic acid. In terms of biological role, catalyzes the reversible hydration of CO(2) to H(2)CO(3). The main role may be to provide inorganic carbon for the bicarbonate-dependent carboxylation reactions catalyzed by pyruvate carboxylase, acetyl-CoA carboxylase and carbamoyl-phosphate synthetase. Involved in protection against oxidative damage. Acts as a CO(2) chemosensor and induces CO(2)-mediated filamentation. Essential for pathological growth in niches where sufficient CO(2) is not supplied by the host. Necessary for white-to-opaque switching at low CO(2) concentrations. The sequence is that of Carbonic anhydrase (NCE103) from Candida albicans (strain SC5314 / ATCC MYA-2876) (Yeast).